The following is a 39-amino-acid chain: Cytochrome b559 subunit beta (39 aa).

The helical transmembrane segment at 14 to 30 (WLTVHGLAVPTVSFLGS) threads the bilayer. Heme is bound at residue His18.

This sequence belongs to the PsbE/PsbF family. In terms of assembly, heterodimer of an alpha subunit and a beta subunit. PSII is composed of 1 copy each of membrane proteins PsbA, PsbB, PsbC, PsbD, PsbE, PsbF, PsbH, PsbI, PsbJ, PsbK, PsbL, PsbM, PsbT, PsbX, PsbY, PsbZ, Psb30/Ycf12, at least 3 peripheral proteins of the oxygen-evolving complex and a large number of cofactors. It forms dimeric complexes. It depends on heme b as a cofactor.

It is found in the plastid. The protein localises to the chloroplast thylakoid membrane. Its function is as follows. This b-type cytochrome is tightly associated with the reaction center of photosystem II (PSII). PSII is a light-driven water:plastoquinone oxidoreductase that uses light energy to abstract electrons from H(2)O, generating O(2) and a proton gradient subsequently used for ATP formation. It consists of a core antenna complex that captures photons, and an electron transfer chain that converts photonic excitation into a charge separation. This Cucumis sativus (Cucumber) protein is Cytochrome b559 subunit beta.